Here is a 405-residue protein sequence, read N- to C-terminus: L-rhamnonate dehydratase (405 aa).

Substrate is bound by residues H33 and R59. 3 residues coordinate Mg(2+): D226, E252, and E280. H329 serves as the catalytic Proton acceptor. A substrate-binding site is contributed by E349.

This sequence belongs to the mandelate racemase/muconate lactonizing enzyme family. RhamD subfamily. Homooctamer; tetramer of dimers. Mg(2+) serves as cofactor.

The enzyme catalyses L-rhamnonate = 2-dehydro-3-deoxy-L-rhamnonate + H2O. Its function is as follows. Catalyzes the dehydration of L-rhamnonate to 2-keto-3-deoxy-L-rhamnonate (KDR). In Escherichia coli O45:K1 (strain S88 / ExPEC), this protein is L-rhamnonate dehydratase.